We begin with the raw amino-acid sequence, 548 residues long: Frizzled-7-B (548 aa).

Positions 1–18 are cleaved as a signal peptide; sequence MLAPVSLLFCLFLQLCPS. Topologically, residues 19–230 are extracellular; it reads AQQYHGEKGI…EEEVRFARLW (212 aa). The region spanning 31 to 150 is the FZ domain; the sequence is PDHGFCQPIS…HGAGEICVGQ (120 aa). Disulfide bonds link cysteine 36–cysteine 97, cysteine 44–cysteine 90, cysteine 81–cysteine 118, cysteine 107–cysteine 147, and cysteine 111–cysteine 135. An N-linked (GlcNAc...) asparagine glycan is attached at asparagine 50. Residue asparagine 151 is glycosylated (N-linked (GlcNAc...) asparagine). The chain crosses the membrane as a helical span at residues 231–251; sequence VGIWAILCGISTLFTVLTYLV. Topologically, residues 252 to 262 are cytoplasmic; that stretch reads DMRRFSYPERP. A helical transmembrane segment spans residues 263–283; it reads IIFLSGCYFMVAVAYTAGFLL. The Extracellular portion of the chain corresponds to 284–311; the sequence is EERAVCVERFSEDSYRTVAQGTKKEGCT. The helical transmembrane segment at 312 to 332 threads the bilayer; the sequence is ILFMILYFFGMASSIWWVILA. The Cytoplasmic segment spans residues 333-353; sequence LTWFLSAGMKWGHEAIEANSQ. A helical transmembrane segment spans residues 354–374; that stretch reads YFHLAAWAVPAVKTITILAMG. At 375 to 397 the chain is on the extracellular side; that stretch reads QVDGDVLSGVCYVGINSVDSLRG. The helical transmembrane segment at 398–418 threads the bilayer; it reads FVLAPLFVYLFLGTSFLLAGF. Topologically, residues 419–444 are cytoplasmic; that stretch reads VSLFRIRTIMKHDGTKTEKLEKLMVR. Residues 445 to 465 traverse the membrane as a helical segment; it reads IGVFSVMYTVPATIVLACYFY. Over 466–502 the chain is Extracellular; it reads EQAFRDTWEKTWLVHTCKGYAVPCPNYNFAPMSPDFT. The chain crosses the membrane as a helical span at residues 503–523; it reads VFMIKYLMTMIVGITSSFWIW. Topologically, residues 524–548 are cytoplasmic; the sequence is SGKTLQSWRRFYHRLGNGSKGETAV. The Lys-Thr-X-X-X-Trp motif, mediates interaction with the PDZ domain of Dvl family members motif lies at 526–531; sequence KTLQSW. Residues 546–548 carry the PDZ-binding motif; sequence TAV.

This sequence belongs to the G-protein coupled receptor Fz/Smo family. As to quaternary structure, interacts with wnt11 and sdc4. The extracellular domain interacts with the extracellular domain of pcdh8/papc. Interacts (via C-terminus) with dvl1 (via PDZ domain). In terms of tissue distribution, during gastrulation, broadly expressed on the dorsal side of the embryo in deep mesodermal cells surrounding the blastopore lip and in presumptive anterior neuroectoderm. During neurulation, localized to the cranial neural crest and heart field where expression is retained at later stages in addition to new areas of expression in the neural tube, pronephros and tailbud. At tailbud stage, expressed in the pronephric duct, and broad head expression becomes more restricted to the hindbrain. In tadpoles, strongly expressed in the eye and the pericardium and myocardium of the developing heart.

It localises to the cell membrane. The protein resides in the endosome membrane. Functionally, receptor for Wnt proteins. Acts in both canonical and non-canonical Wnt pathways. Although different papers report differing Wnt preferences, wnt5a, wnt8b and wnt11 have been proposed as synergists. In the canonical Wnt pathway, acts via beta-catenin to promote the expression of the dorsal genes siamois, twin and nodal3 and to establish the dorsal axis of the embryo and induce dorsal mesoderm formation. In a non-canonical Wnt/planar cell polarity (PCP) pathway, acts with sdc4 and dvl2/dsh to regulate convergent extension cell movements during gastrulation. Triggers phosphorylation of dvl2/dsh and its translocation to the plasma membrane. In a third branch of Wnt signaling, acts in a non-canonical pathway via trimeric G proteins, and independently of dvl2/dsh, to recruit protein kinase C (PKC) to the membrane and thus activate PKC. PKC signaling controls cell sorting and tissue separation during gastrulation. This Xenopus laevis (African clawed frog) protein is Frizzled-7-B (fzd7-b).